The primary structure comprises 366 residues: Ribosomal RNA large subunit methyltransferase M (366 aa).

S-adenosyl-L-methionine contacts are provided by residues Ser188, Cys221 to Gly224, Asp240, Asp260, and Asp277. The Proton acceptor role is filled by Lys306.

Belongs to the class I-like SAM-binding methyltransferase superfamily. RNA methyltransferase RlmE family. RlmM subfamily. In terms of assembly, monomer.

The protein resides in the cytoplasm. It carries out the reaction cytidine(2498) in 23S rRNA + S-adenosyl-L-methionine = 2'-O-methylcytidine(2498) in 23S rRNA + S-adenosyl-L-homocysteine + H(+). In terms of biological role, catalyzes the 2'-O-methylation at nucleotide C2498 in 23S rRNA. In Musicola paradisiaca (strain Ech703) (Dickeya paradisiaca), this protein is Ribosomal RNA large subunit methyltransferase M.